Reading from the N-terminus, the 130-residue chain is Anti-adapter protein IraD (130 aa).

This sequence belongs to the GpW/Gp25 family. IraD subfamily. In terms of assembly, interacts with RssB.

The protein resides in the cytoplasm. Functionally, inhibits RpoS proteolysis by regulating RssB activity, thereby increasing the stability of the sigma stress factor RpoS during oxidative stress. Its effect on RpoS stability is due to its interaction with RssB, which probably blocks the interaction of RssB with RpoS, and the consequent delivery of the RssB-RpoS complex to the ClpXP protein degradation pathway. The sequence is that of Anti-adapter protein IraD from Escherichia coli O45:K1 (strain S88 / ExPEC).